Here is a 154-residue protein sequence, read N- to C-terminus: Superoxide dismutase [Cu-Zn] (154 aa).

His-47, His-49, and His-64 together coordinate Cu cation. Cys-58 and Cys-147 are disulfide-bonded. Zn(2+) is bound by residues His-64, His-72, His-81, and Asp-84. His-121 lines the Cu cation pocket. Position 144 (Arg-144) interacts with substrate.

It belongs to the Cu-Zn superoxide dismutase family. As to quaternary structure, homodimer. The cofactor is Cu cation. Zn(2+) serves as cofactor.

The protein localises to the cytoplasm. It carries out the reaction 2 superoxide + 2 H(+) = H2O2 + O2. Destroys radicals which are normally produced within the cells and which are toxic to biological systems. In Eremothecium gossypii (strain ATCC 10895 / CBS 109.51 / FGSC 9923 / NRRL Y-1056) (Yeast), this protein is Superoxide dismutase [Cu-Zn] (SOD1).